Reading from the N-terminus, the 445-residue chain is tRNA(Ile2) 2-agmatinylcytidine synthetase TiaS (445 aa).

A DNA-binding region (OB) is located at residues 278 to 349; the sequence is VVVRGSVAEK…KDGLVLNAEY (72 aa).

The protein belongs to the TiaS family.

The protein localises to the cytoplasm. It catalyses the reaction cytidine(34) in tRNA(Ile2) + agmatine + ATP + H2O = 2-agmatinylcytidine(34) in tRNA(Ile2) + AMP + 2 phosphate + 2 H(+). In terms of biological role, ATP-dependent agmatine transferase that catalyzes the formation of 2-agmatinylcytidine (agm2C) at the wobble position (C34) of tRNA(Ile2), converting the codon specificity from AUG to AUA. The polypeptide is tRNA(Ile2) 2-agmatinylcytidine synthetase TiaS (Thermofilum pendens (strain DSM 2475 / Hrk 5)).